Consider the following 590-residue polypeptide: Guanylate-binding protein 1 (590 aa).

The GTPase domain (Globular) stretch occupies residues M1–C309. Residues T35–K276 enclose the GB1/RHD3-type G domain. Residues G45 to S52, L67 to S69, and D97 to L101 each bind GTP. Position 156 is a phosphoserine (S156). The residue at position 587 (C587) is a Cysteine methyl ester. C587 carries S-farnesyl cysteine lipidation. The residue at position 588 (T588) is a Phosphothreonine. The propeptide at T588 to S590 is removed in mature form.

The protein belongs to the TRAFAC class dynamin-like GTPase superfamily. GB1/RHD3 GTPase family. GB1 subfamily. Homodimer; homodimerization occurs upon GTP-binding and is required for the second hydrolysis step from GDP to GMP. Undergoes conformational changes and oligomerization upon GTP-binding and hydrolysis. Heterodimer with other family members, including GBP2, GBP3, GBP4 and GBP5. Dimerization regulates subcellular location to membranous structures. Interacts with SQSTM1. Interacts (when phosphorylated) with 14-3-3 protein sigma (SFN); leading to GBP1 retention in the cytosol and inactivation. Isoprenylation is required for proper subcellular location. In terms of processing, phosphorylated at Ser-156 by PIM1 in absence of infection, inhibits GBP1: phosphorylation promotes interaction with 14-3-3 protein sigma (SFN), leading to GBP1 retention in the cytosol. Dephosphorylated in response to infection, liberating GBP1.

It is found in the cytoplasmic vesicle membrane. The protein localises to the golgi apparatus membrane. Its subcellular location is the cell membrane. The protein resides in the cytoplasm. It localises to the cytosol. It is found in the secreted. It catalyses the reaction GTP + H2O = GDP + phosphate + H(+). The catalysed reaction is GDP + H2O = GMP + phosphate + H(+). Interferon (IFN)-inducible GTPase that plays important roles in innate immunity against a diverse range of bacterial, viral and protozoan pathogens. Hydrolyzes GTP to GMP in two consecutive cleavage reactions: GTP is first hydrolyzed to GDP and then to GMP in a processive manner. Following infection, recruited to the pathogen-containing vacuoles or vacuole-escaped bacteria and promotes both inflammasome assembly and autophagy. Acts as a positive regulator of inflammasome assembly by facilitating the detection of inflammasome ligands from pathogens. Involved in the lysis of pathogen-containing vacuoles, releasing pathogens into the cytosol. Following pathogen release in the cytosol, forms a protein coat in a GTPase-dependent manner that encapsulates pathogens and promotes the detection of ligands by pattern recognition receptors. Plays a key role in inflammasome assembly in response to infection by Gram-negative bacteria: following pathogen release in the cytosol, forms a protein coat that encapsulates Gram-negative bacteria and directly binds to lipopolysaccharide (LPS), disrupting the O-antigen barrier and unmasking lipid A that is that detected by the non-canonical inflammasome effector CASP4/CASP11. Also promotes recruitment of proteins that mediate bacterial cytolysis, leading to release double-stranded DNA (dsDNA) that activates the AIM2 inflammasome. Involved in autophagy by regulating bacteriolytic peptide generation via its interaction with ubiquitin-binding protein SQSTM1, which delivers monoubiquitinated proteins to autolysosomes for the generation of bacteriolytic peptides. Confers protection to several pathogens, including the bacterial pathogens L.monocytogenes and M.bovis BCG as well as the protozoan pathogen T.gondii. Exhibits antiviral activity against influenza virus. This Chlorocebus aethiops (Green monkey) protein is Guanylate-binding protein 1 (GBP1).